The sequence spans 455 residues: T-box protein VegT-A (455 aa).

Disordered stretches follow at residues 21 to 40, 229 to 262, and 295 to 346; these read SNCA…SSQD, REQE…DSPE, and ANQG…EPSS. The T-box DNA-binding region spans 57 to 230; that stretch reads LWSQFHQEGT…HNPFAKGFRE (174 aa). Residues 229-241 are compositionally biased toward basic and acidic residues; that stretch reads REQERSHKRDDVL. Residues 308–324 show a composition bias toward polar residues; that stretch reads GANQEQQVPTSSSNFYN.

In terms of assembly, forms a repression complex on the promoters of the nodal/nr1 and siamois genes with the maternal factors tcf7l1/tcf3 and pouf5.1/oct-25. Interacts (via C-terminus) with tcf7l1/tcf3 (via N-terminus). Also interacts with the other POU-domain transcription factors pou5f1.2/oct-91 and pou5f1.3/oct-60. As to expression, uniformly distributed in stage I oocytes but becomes localized to the vegetal hemisphere by stage II and remains so thereafter throughout oogenesis and the early embryonic cleavage stages. Zygotic expression parallels blastopore formation and shifts from dorsal expression in the marginal zone of late blastula and early gastrula stages to a ventral/lateral expression at the posterior end of later stage embryos. Expression is excluded from the notochord. In tailbud and tadpole stages, expressed exclusively in a subset of posterior Rohon-Beard neurons.

It localises to the nucleus. In terms of biological role, transcription factor required for both mesoderm and endoderm formation in the embryo; signaling determinants and concentration levels may determine which germ layer is formed. Acts together with beta-catenin to activate genes that are responsible for mesoderm induction including wnt-8, eomes t/bra, siamois, mix1 and sox17. Directly binds to promoter DNA. Patterns the mesoderm along the dorsoventral and posterior axis. Activates siamois gene transcription when alone or in combination with beta-catenin, but inhibits siamois transcription in combination with pou5f1.1/oct-25. This Xenopus laevis (African clawed frog) protein is T-box protein VegT-A (vegt-a).